The following is a 156-amino-acid chain: Small ribosomal subunit protein uS7 (156 aa).

It belongs to the universal ribosomal protein uS7 family. In terms of assembly, part of the 30S ribosomal subunit. Contacts proteins S9 and S11.

One of the primary rRNA binding proteins, it binds directly to 16S rRNA where it nucleates assembly of the head domain of the 30S subunit. Is located at the subunit interface close to the decoding center, probably blocks exit of the E-site tRNA. The polypeptide is Small ribosomal subunit protein uS7 (Citrobacter koseri (strain ATCC BAA-895 / CDC 4225-83 / SGSC4696)).